The primary structure comprises 318 residues: Methionyl-tRNA formyltransferase (318 aa).

112–115 is a (6S)-5,6,7,8-tetrahydrofolate binding site; sequence SILP.

Belongs to the Fmt family.

It carries out the reaction L-methionyl-tRNA(fMet) + (6R)-10-formyltetrahydrofolate = N-formyl-L-methionyl-tRNA(fMet) + (6S)-5,6,7,8-tetrahydrofolate + H(+). Its function is as follows. Attaches a formyl group to the free amino group of methionyl-tRNA(fMet). The formyl group appears to play a dual role in the initiator identity of N-formylmethionyl-tRNA by promoting its recognition by IF2 and preventing the misappropriation of this tRNA by the elongation apparatus. The chain is Methionyl-tRNA formyltransferase from Shewanella sp. (strain MR-4).